We begin with the raw amino-acid sequence, 174 residues long: Pituitary tumor-transforming gene 1 protein-interacting protein (174 aa).

Positions 1–29 (MAPANLGLTPHWVMLLGAVLLLLLSGASA) are cleaved as a signal peptide. The Extracellular portion of the chain corresponds to 30–93 (QEPPRVGCSE…RWGVCWVNFE (64 aa)). The region spanning 36 to 89 (GCSEYTNRSCEECLRNVSCLWCNENKACMDYPVRKILPPASLCKLSSARWGVCW) is the PSI domain. Residues N42 and N51 are each glycosylated (N-linked (GlcNAc...) asparagine). Residues 94 to 114 (ALIITMSVLGGSVLLGITVCC) form a helical membrane-spanning segment. Residues 115–174 (CYCCRRKKSRKPDKSDERAMREQEERRVRQEERRAEMKSRHDEIRKKYGLFKEQNPYEKF) lie on the Cytoplasmic side of the membrane. Residues 125–155 (KPDKSDERAMREQEERRVRQEERRAEMKSRH) form a disordered region. Basic and acidic residues predominate over residues 126-155 (PDKSDERAMREQEERRVRQEERRAEMKSRH). A coiled-coil region spans residues 127 to 163 (DKSDERAMREQEERRVRQEERRAEMKSRHDEIRKKYG). Y171 bears the Phosphotyrosine mark.

In terms of assembly, interacts with PTTG1.

The protein resides in the cell membrane. Its subcellular location is the cytoplasm. It is found in the nucleus. In terms of biological role, may facilitate PTTG1 nuclear translocation. The protein is Pituitary tumor-transforming gene 1 protein-interacting protein (Pttg1ip) of Mus musculus (Mouse).